The sequence spans 220 residues: Claudin-6 (220 aa).

The Cytoplasmic segment spans residues 1–7; the sequence is MASAGMQ. The chain crosses the membrane as a helical span at residues 8 to 28; the sequence is ILGVVLTLLGWVNGLVSCALP. The Extracellular segment spans residues 29-81; sequence MWKVTAFIGNSIVVAQVVWEGLWMSCVVQSTGQMQCKVYDSLLALPQDLQAAR. The helical transmembrane segment at 82–102 threads the bilayer; the sequence is ALCVIALLVALFGLLVYLAGA. The Cytoplasmic segment spans residues 103-116; that stretch reads KCTTCVEEKDSKAR. The helical transmembrane segment at 117–137 threads the bilayer; that stretch reads LVLTSGIVFVISGVLTLIPVC. The Extracellular portion of the chain corresponds to 138–160; that stretch reads WTAHAIIRDFYNPLVAEAQKREL. A helical membrane pass occupies residues 161-181; that stretch reads GASLYLGWAASGLLLLGGGLL. Residues 182-220 are Cytoplasmic-facing; that stretch reads CCTCPSGGSQGPSHYMARYSTSAPAISRGPSEYPTKNYV. 4 positions are modified to phosphoserine: Ser-201, Ser-203, Ser-208, and Ser-212. The interactions with TJP1, TJP2 and TJP3 stretch occupies residues 219 to 220; sequence YV.

Belongs to the claudin family. As to quaternary structure, directly interacts with TJP1/ZO-1, TJP2/ZO-2 and TJP3/ZO-3. Interacts with CLDN1, CD81 and OCLN. Expressed in the liver, in peripheral blood mononuclear cells and hepatocarcinoma cell lines.

Its subcellular location is the cell junction. It localises to the tight junction. The protein localises to the cell membrane. Plays a major role in tight junction-specific obliteration of the intercellular space. Its function is as follows. (Microbial infection) Acts as a receptor for hepatitis C virus (HCV) entry into hepatic cells. In Homo sapiens (Human), this protein is Claudin-6 (CLDN6).